The primary structure comprises 664 residues: Macoilin-1 (664 aa).

The next 4 membrane-spanning stretches (helical) occupy residues 28 to 48 (TFLY…DFVL), 75 to 95 (AFSV…LLFI), 120 to 140 (VCLP…AIRF), and 154 to 174 (FAAH…KSYV). Positions 206 to 225 (QMLQRQERETEEATSKGMSE) are disordered. The segment covering 210–219 (RQERETEEAT) has biased composition (basic and acidic residues). Residues asparagine 234, asparagine 336, asparagine 339, asparagine 348, and asparagine 655 are each glycosylated (N-linked (GlcNAc...) asparagine). Disordered stretches follow at residues 315 to 364 (VGAG…LAPH) and 644 to 664 (FMDT…PLKK). Residues 334-348 (SHNSTNGSVPSSSSN) show a composition bias toward low complexity. The segment covering 644–658 (FMDTSPSSLDPNASV) has biased composition (polar residues).

The protein belongs to the macoilin family.

It is found in the nucleus membrane. Its subcellular location is the rough endoplasmic reticulum membrane. Functionally, may play a role in the regulation of neuronal activity. The chain is Macoilin-1 from Danio rerio (Zebrafish).